Consider the following 61-residue polypeptide: MRGLPVFVILLLLIASEPSVDARPKTKADVPLTSLNDNAKRTLQILRNKRACCPYEPSCCI.

The first 22 residues, 1–22 (MRGLPVFVILLLLIASEPSVDA), serve as a signal peptide directing secretion. A propeptide spanning residues 23 to 48 (RPKTKADVPLTSLNDNAKRTLQILRN) is cleaved from the precursor.

The protein belongs to the conotoxin T superfamily. In terms of processing, contains 2 disulfide bonds that can be either 'C1-C3, C2-C4' or 'C1-C4, C2-C3', since these disulfide connectivities have been observed for conotoxins with cysteine framework V (for examples, see AC P0DQQ7 and AC P81755). As to expression, expressed by the venom duct.

It is found in the secreted. This Conus betulinus (Beech cone) protein is Conotoxin Bt5.1.